Consider the following 535-residue polypeptide: Pyrichalasin C-18 hydroxylase (535 aa).

Residues 42 to 62 (LPSGTLIVLAALSLALLVAVL) form a helical membrane-spanning segment. N-linked (GlcNAc...) asparagine glycans are attached at residues asparagine 139 and asparagine 222. Residue cysteine 479 coordinates heme.

Belongs to the cytochrome P450 family. It depends on heme as a cofactor.

Its subcellular location is the membrane. The protein operates within mycotoxin biosynthesis. Its function is as follows. Cytochrome P450 monooxygenase; part of the gene cluster that mediates the biosynthesis of the mycotoxin pyrichalasin H, a tyrosine-derived cytochalasan that inhibits the growth of rice seedlings, but also inhibits lymphocyte capping and actin polymerization and alters cell morphology. Pyrichalasin H is indicated as the responsible agent for the genus-specific pathogenicity of M.grisea toward crabgrass. The first step in the pathway is catalyzed by the O-methyltransferase pyiA which methylates free tyrosine to generate the precursor O-methyltyrosine. The hybrid PKS-NRPS pyiS, assisted by the enoyl reductase pyiC, are responsible for fusion of the O-methyltyrosine precursor and the polyketide backbone. The polyketide synthase module (PKS) of pyiS is responsible for the synthesis of the polyketide backbone and the downstream nonribosomal peptide synthetase (NRPS) amidates the carboxyl end of the polyketide with the O-methyltyrosine precursor. As the NRPS A-domain demonstrates substrate tolerance, pyiS can also use phenylalanine, tyrosine and even para-chlorophenylalanine as amino acid precursor, which leads to the production of novel cytochalasans, including halogenated cytochalasans. Because pyiS lacks a designated enoylreductase (ER) domain, the required activity is provided the enoyl reductase pyiC. Reduction by the hydrolyase pyiE leads to 1,5-dihydropyrrolone, which is substrate for dehydration and intra-molecular Diels-Alder cyclization by the Diels-Alderase pyiF to yield the required isoindolone-fused macrocycle. The tailoring cytochrome P450 monooxygenases piyD and piyG catalyze the hydroxylation at C-18 and C-7, respectivily, whereas the short-chain dehydrogenase/reductase pyiH reduces the carbonyl at C-21 in preparation for the transfer of an acetyl group by the acetyltransferase pyiB. These 3 reactions whose order is not clear yet, lead to the production of O-methylpyrichalasin J, a deacetylated pyrichalasin H. Finally, pyiB to converts O-methylpyrichalasin J into the final product pyrichalasin H via acetylation of C-21. The polypeptide is Pyrichalasin C-18 hydroxylase (Pyricularia grisea (Crabgrass-specific blast fungus)).